The chain runs to 418 residues: Serine hydroxymethyltransferase (418 aa).

Residues Leu121 and 125 to 127 (GHL) each bind (6S)-5,6,7,8-tetrahydrofolate. At Lys230 the chain carries N6-(pyridoxal phosphate)lysine. (6S)-5,6,7,8-tetrahydrofolate is bound by residues Glu246 and 355–357 (SPF).

It belongs to the SHMT family. In terms of assembly, homodimer. Pyridoxal 5'-phosphate serves as cofactor.

It localises to the cytoplasm. The catalysed reaction is (6R)-5,10-methylene-5,6,7,8-tetrahydrofolate + glycine + H2O = (6S)-5,6,7,8-tetrahydrofolate + L-serine. The protein operates within one-carbon metabolism; tetrahydrofolate interconversion. It participates in amino-acid biosynthesis; glycine biosynthesis; glycine from L-serine: step 1/1. Catalyzes the reversible interconversion of serine and glycine with tetrahydrofolate (THF) serving as the one-carbon carrier. This reaction serves as the major source of one-carbon groups required for the biosynthesis of purines, thymidylate, methionine, and other important biomolecules. Also exhibits THF-independent aldolase activity toward beta-hydroxyamino acids, producing glycine and aldehydes, via a retro-aldol mechanism. The sequence is that of Serine hydroxymethyltransferase from Streptococcus pneumoniae serotype 19F (strain G54).